We begin with the raw amino-acid sequence, 268 residues long: MKFAVIGNPISHSLSPVMHRANFNSLGLDDTYEALNIPIEDFHLIKEIISKKELDGFNITIPHKERIIPYLDYVDEQAINAGAVNTVLIKDGKWIGYNTDGIGYVKGLHSVYPDLENAYILILGAGGASKGIAYELAKFLKLKLTVANRTMARFESWNLNINQISLADAENYLAEFDIVINTTPAGMAGNNESIINLKHLSPNTLMSDIIYIPYKTPILEEAERKGNHIYNGLDMFVYQGAESFKIWTNKDADINSMKTAVLQQLKGE.

Shikimate-binding positions include 13-15 and T60; that span reads SLS. The active-site Proton acceptor is K64. E76 is an NADP(+) binding site. Residues N85 and D100 each contribute to the shikimate site. Residues 124–128, 148–153, and I209 each bind NADP(+); these read GAGGA and NRTMAR. Y211 is a shikimate binding site. An NADP(+)-binding site is contributed by G232.

This sequence belongs to the shikimate dehydrogenase family. As to quaternary structure, homodimer.

The enzyme catalyses shikimate + NADP(+) = 3-dehydroshikimate + NADPH + H(+). It functions in the pathway metabolic intermediate biosynthesis; chorismate biosynthesis; chorismate from D-erythrose 4-phosphate and phosphoenolpyruvate: step 4/7. Involved in the biosynthesis of the chorismate, which leads to the biosynthesis of aromatic amino acids. Catalyzes the reversible NADPH linked reduction of 3-dehydroshikimate (DHSA) to yield shikimate (SA). The sequence is that of Shikimate dehydrogenase (NADP(+)) from Staphylococcus aureus (strain bovine RF122 / ET3-1).